The sequence spans 5085 residues: Linear gramicidin synthase subunit D (5085 aa).

Carrier domains are found at residues 962-1037, 2023-2097, 3544-3619, and 4601-4676; these read APRT…AAAG, SPST…EEKA, APRN…ELLT, and APQT…EEII. 4 positions are modified to O-(pantetheine 4'-phosphoryl)serine: Ser997, Ser2058, Ser3579, and Ser4636.

Belongs to the ATP-dependent AMP-binding enzyme family. In terms of assembly, large multienzyme complex composed of 4 subunits; LgrA, LgrB, LgrC and LgrD. Pantetheine 4'-phosphate serves as cofactor.

In terms of biological role, activates the 13th to the 16th (Trp, D-Leu, Trp and Gly) amino acids in linear gramicidin and catalyzes the formation of the peptide bond between them. This enzyme is also responsible for the epimerization of the 14th (D-Leu) amino acid. It also catalyzes the NAD(P)H-dependent reduction of the C-terminal glycine residue of the N-formylated 16-mer peptide, that binds to the peptidyl carrier domain of the terminal module of this protein, to form a peptidyl-aldehyde intermediate that is released from the enzyme complex. This is Linear gramicidin synthase subunit D (lgrD) from Brevibacillus parabrevis.